A 289-amino-acid polypeptide reads, in one-letter code: S-methyl-5'-thioadenosine phosphorylase (289 aa).

Residues Ser-11, 53-54, and 86-87 each bind phosphate; these read RH and SA. Met-187 contacts substrate. Position 188 (Thr-188) interacts with phosphate. 211-213 serves as a coordination point for substrate; that stretch reads DYD.

This sequence belongs to the PNP/MTAP phosphorylase family. MTAP subfamily. Homohexamer. Dimer of a homotrimer.

It catalyses the reaction S-methyl-5'-thioadenosine + phosphate = 5-(methylsulfanyl)-alpha-D-ribose 1-phosphate + adenine. Its pathway is amino-acid biosynthesis; L-methionine biosynthesis via salvage pathway; S-methyl-5-thio-alpha-D-ribose 1-phosphate from S-methyl-5'-thioadenosine (phosphorylase route): step 1/1. Its function is as follows. Catalyzes the reversible phosphorylation of S-methyl-5'-thioadenosine (MTA) to adenine and 5-methylthioribose-1-phosphate. Involved in the breakdown of MTA, a major by-product of polyamine biosynthesis. Responsible for the first step in the methionine salvage pathway after MTA has been generated from S-adenosylmethionine. Has broad substrate specificity with 6-aminopurine nucleosides as preferred substrates. This Thermosynechococcus vestitus (strain NIES-2133 / IAM M-273 / BP-1) protein is S-methyl-5'-thioadenosine phosphorylase.